A 172-amino-acid polypeptide reads, in one-letter code: Ribosome maturation factor RimM (172 aa).

The PRC barrel domain maps to Ala-95–Leu-168.

The protein belongs to the RimM family. Binds ribosomal protein uS19.

Its subcellular location is the cytoplasm. An accessory protein needed during the final step in the assembly of 30S ribosomal subunit, possibly for assembly of the head region. Essential for efficient processing of 16S rRNA. May be needed both before and after RbfA during the maturation of 16S rRNA. It has affinity for free ribosomal 30S subunits but not for 70S ribosomes. This Streptococcus equi subsp. zooepidemicus (strain MGCS10565) protein is Ribosome maturation factor RimM.